Here is a 682-residue protein sequence, read N- to C-terminus: DNA-directed RNA polymerase subunit beta' (682 aa).

Zn(2+) contacts are provided by Cys69, Cys71, Cys87, and Cys90. Mg(2+) is bound by residues Asp489, Asp491, and Asp493.

Belongs to the RNA polymerase beta' chain family. RpoC1 subfamily. In terms of assembly, in plastids the minimal PEP RNA polymerase catalytic core is composed of four subunits: alpha, beta, beta', and beta''. When a (nuclear-encoded) sigma factor is associated with the core the holoenzyme is formed, which can initiate transcription. Requires Mg(2+) as cofactor. The cofactor is Zn(2+).

It is found in the plastid. The protein resides in the chloroplast. The catalysed reaction is RNA(n) + a ribonucleoside 5'-triphosphate = RNA(n+1) + diphosphate. DNA-dependent RNA polymerase catalyzes the transcription of DNA into RNA using the four ribonucleoside triphosphates as substrates. The protein is DNA-directed RNA polymerase subunit beta' of Oryza nivara (Indian wild rice).